The primary structure comprises 349 residues: Large ribosomal subunit protein uL2mz, N-terminal part (349 aa).

The protein belongs to the universal ribosomal protein uL2 family. In terms of assembly, component of the mitochondrial ribosome large subunit.

Its subcellular location is the mitochondrion. The protein is Large ribosomal subunit protein uL2mz, N-terminal part of Arabidopsis thaliana (Mouse-ear cress).